The sequence spans 205 residues: Coatomer subunit zeta-2 (205 aa).

Over residues 1–12 (MQRPEAWPRPHP) the composition is skewed to basic and acidic residues. The tract at residues 1 to 33 (MQRPEAWPRPHPGEGASAAQAGGAAPPTRATEQ) is disordered. Positions 13 to 30 (GEGASAAQAGGAAPPTRA) are enriched in low complexity.

It belongs to the adaptor complexes small subunit family. Oligomeric complex.

It is found in the cytoplasm. The protein localises to the cytosol. The protein resides in the endoplasmic reticulum-Golgi intermediate compartment membrane. It localises to the golgi apparatus membrane. Its subcellular location is the cytoplasmic vesicle. It is found in the COPI-coated vesicle membrane. Its function is as follows. The coatomer is a cytosolic protein complex that binds to dilysine motifs and reversibly associates with Golgi non-clathrin-coated vesicles, which further mediate biosynthetic protein transport from the ER, via the Golgi up to the trans Golgi network. Coatomer complex is required for budding from Golgi membranes, and is essential for the retrograde Golgi-to-ER transport of dilysine-tagged proteins. The zeta subunit may be involved in regulating the coat assembly and, hence, the rate of biosynthetic protein transport due to its association-dissociation properties with the coatomer complex. The sequence is that of Coatomer subunit zeta-2 (Copz2) from Mus musculus (Mouse).